Reading from the N-terminus, the 448-residue chain is Homogentisate 1,2-dioxygenase (448 aa).

Histidine 303 functions as the Proton acceptor in the catalytic mechanism. Positions 346 and 352 each coordinate Fe cation. Homogentisate-binding residues include tyrosine 361 and histidine 382. Histidine 382 contacts Fe cation.

It belongs to the homogentisate dioxygenase family. Hexamer; dimer of trimers. Fe cation is required as a cofactor.

It catalyses the reaction homogentisate + O2 = 4-maleylacetoacetate + H(+). Its pathway is amino-acid degradation; L-phenylalanine degradation; acetoacetate and fumarate from L-phenylalanine: step 4/6. Involved in the catabolism of homogentisate (2,5-dihydroxyphenylacetate or 2,5-OH-PhAc), a central intermediate in the degradation of phenylalanine and tyrosine. Catalyzes the oxidative ring cleavage of the aromatic ring of homogentisate to yield maleylacetoacetate. This is Homogentisate 1,2-dioxygenase from Rhodopseudomonas palustris (strain TIE-1).